The sequence spans 124 residues: Large ribosomal subunit protein bL12 (124 aa).

It belongs to the bacterial ribosomal protein bL12 family. In terms of assembly, homodimer. Part of the ribosomal stalk of the 50S ribosomal subunit. Forms a multimeric L10(L12)X complex, where L10 forms an elongated spine to which 2 to 4 L12 dimers bind in a sequential fashion. Binds GTP-bound translation factors.

Functionally, forms part of the ribosomal stalk which helps the ribosome interact with GTP-bound translation factors. Is thus essential for accurate translation. This is Large ribosomal subunit protein bL12 from Cupriavidus pinatubonensis (strain JMP 134 / LMG 1197) (Cupriavidus necator (strain JMP 134)).